Reading from the N-terminus, the 855-residue chain is Pre-mRNA-splicing factor SYF1 (855 aa).

HAT repeat units follow at residues 15 to 47 (LVFE…FKQG), 48 to 80 (APKP…ARRA), 90 to 122 (PAYE…FLMD), 124 to 158 (GRVT…FLRS), 160 to 192 (PLPE…SSDR), 198 to 230 (QRLA…LISQ), 235 to 268 (VQSL…YYIR), 270 to 305 (GHFE…FEES), and 369 to 407 (GRPR…FYED). The residue at position 420 (K420) is an N6-acetyllysine. HAT repeat units follow at residues 498–530 (GTFQ…FLEE), 532–566 (KYFE…KFIS), 571–605 (RKLE…LEEE), 643–677 (YGVT…MECK), and 679–713 (GEID…FEVR). The tract at residues 808 to 855 (AELAQQANPEEIQLGEDEDEDEMDLEPNEVRLEQQSVPAAVFGSLKED) is disordered. Acidic residues predominate over residues 820-834 (QLGEDEDEDEMDLEP). S851 bears the Phosphoserine mark.

This sequence belongs to the crooked-neck family. In terms of assembly, associates with RNA polymerase II, the TCR-specific proteins CKN1/CSA and ERCC6/CSB, and XPA. Identified in the spliceosome C complex. Component of the XAB2 complex, a multimeric protein complex composed of XAB2, PRPF19, AQR, ZNF830, ISY1, and PPIE. Identified in a pentameric intron-binding (IB) complex composed of AQR, XAB2, ISY1, ZNF830 and PPIE that is incorporated into the spliceosome as a preassembled complex. The IB complex does not contain PRPF19.

The protein resides in the nucleus. In terms of biological role, involved in pre-mRNA splicing as component of the spliceosome. Involved in transcription-coupled repair (TCR), transcription and pre-mRNA splicing. This is Pre-mRNA-splicing factor SYF1 (Xab2) from Mus musculus (Mouse).